The chain runs to 302 residues: MNETIPGSIDIETLIPDLMIIIFGLVGLTGNAIVFWLLGFRMHRTAFLVYILNLALADFLFLLCHIINSTVDLLKFTLPKGIFAFCFHTIKRVLYITGLSMLSAISTERCLSVLCPIWYHCRRPEHTSTVMCAVIWVLSLLICILDGYFCGYLDNHYFNYSVCQAWDIFIGAYLMFLFVVLCLSTLALLARLFCGARNMKFTRLFVTIMLTVLVFLLCGLPWGITWFLLFWIAPGVFVLDYSPLLVLTAINSCANPIIYFFVGSFRQRLNKQTLKMVLQKALQDTPETPENMVEMSRNKAEP.

Topologically, residues 1 to 17 are extracellular; that stretch reads MNETIPGSIDIETLIPD. N-linked (GlcNAc...) asparagine glycosylation occurs at Asn2. A helical membrane pass occupies residues 18–38; the sequence is LMIIIFGLVGLTGNAIVFWLL. Topologically, residues 39–46 are cytoplasmic; that stretch reads GFRMHRTA. Residues 47–67 traverse the membrane as a helical segment; it reads FLVYILNLALADFLFLLCHII. N-linked (GlcNAc...) asparagine glycosylation occurs at Asn68. Topologically, residues 68–81 are extracellular; the sequence is NSTVDLLKFTLPKG. The helical transmembrane segment at 82–102 threads the bilayer; sequence IFAFCFHTIKRVLYITGLSML. Over 103-129 the chain is Cytoplasmic; that stretch reads SAISTERCLSVLCPIWYHCRRPEHTST. A helical transmembrane segment spans residues 130–150; it reads VMCAVIWVLSLLICILDGYFC. Topologically, residues 151–167 are extracellular; that stretch reads GYLDNHYFNYSVCQAWD. Asn159 is a glycosylation site (N-linked (GlcNAc...) asparagine). A helical transmembrane segment spans residues 168 to 188; it reads IFIGAYLMFLFVVLCLSTLAL. At 189 to 211 the chain is on the cytoplasmic side; sequence LARLFCGARNMKFTRLFVTIMLT. A helical transmembrane segment spans residues 212–232; that stretch reads VLVFLLCGLPWGITWFLLFWI. The Extracellular portion of the chain corresponds to 233 to 242; it reads APGVFVLDYS. Residues 243–263 traverse the membrane as a helical segment; that stretch reads PLLVLTAINSCANPIIYFFVG. At 264 to 302 the chain is on the cytoplasmic side; sequence SFRQRLNKQTLKMVLQKALQDTPETPENMVEMSRNKAEP.

It belongs to the G-protein coupled receptor 1 family. Mas subfamily. As to expression, expressed exclusively in dorsal root ganglia and nodose ganglia. Expressed in a subset of sensory neurons that includes nociceptors. Expressed in the subclass of non-peptidergic sensory neurons that are IB4(+) and VR1(-).

It is found in the cell membrane. Orphan receptor. May be a receptor for RFamide-family neuropeptides such as NPFF and NPAF, which are analgesic in vivo. May regulate nociceptor function and/or development, including the sensation or modulation of pain. Activated by the antimalarial drug chloroquine. Mediates chloroquine-induced itch, in a histamine-independent manner. This is Mas-related G-protein coupled receptor member A3 (Mrgpra3) from Mus musculus (Mouse).